The sequence spans 481 residues: Flavonol 3-O-glucosyltransferase UGT71C1 (481 aa).

His19 acts as the Proton acceptor in catalysis. His19 serves as a coordination point for an anthocyanidin. The active-site Charge relay is the Asp131. Residues Thr153, Ala352, Gln354, His369, Trp372, Asn373, Ser374, and Glu377 each contribute to the UDP-alpha-D-glucose site. Ala392 is a binding site for an anthocyanidin. Residues Glu393 and Gln394 each contribute to the UDP-alpha-D-glucose site.

It belongs to the UDP-glycosyltransferase family.

The enzyme catalyses a flavonol + UDP-alpha-D-glucose = a flavonol 3-O-beta-D-glucoside + UDP + H(+). It catalyses the reaction a 7-O-hydroxy-flavonol + UDP-alpha-D-glucose = a flavonol 7-O-beta-D-glucoside + UDP + H(+). Possesses quercetin 7-O-glucosyltransferase and 3'-O-glucosyltransferase activities in vitro. Also active in vitro on benzoates and benzoate derivatives. Glucosylates other secondary metabolites in vitro like trans-resveratrol, curcumin, vanillin and etoposide. The protein is Flavonol 3-O-glucosyltransferase UGT71C1 of Arabidopsis thaliana (Mouse-ear cress).